The sequence spans 401 residues: 8-amino-7-oxononanoate synthase (401 aa).

R24 lines the substrate pocket. 111-112 (GF) is a pyridoxal 5'-phosphate binding site. A substrate-binding site is contributed by H137. Pyridoxal 5'-phosphate is bound by residues S183, H211, and T240. Residue K243 is modified to N6-(pyridoxal phosphate)lysine. T357 serves as a coordination point for substrate.

This sequence belongs to the class-II pyridoxal-phosphate-dependent aminotransferase family. BioF subfamily. Homodimer. Pyridoxal 5'-phosphate is required as a cofactor.

The enzyme catalyses 6-carboxyhexanoyl-[ACP] + L-alanine + H(+) = (8S)-8-amino-7-oxononanoate + holo-[ACP] + CO2. It functions in the pathway cofactor biosynthesis; biotin biosynthesis. Its function is as follows. Catalyzes the decarboxylative condensation of pimeloyl-[acyl-carrier protein] and L-alanine to produce 8-amino-7-oxononanoate (AON), [acyl-carrier protein], and carbon dioxide. This is 8-amino-7-oxononanoate synthase from Xylella fastidiosa (strain M23).